The sequence spans 306 residues: Glutaminase (306 aa).

7 residues coordinate substrate: S64, N115, E159, N166, Y190, Y242, and V260.

It belongs to the glutaminase family. Homotetramer.

The catalysed reaction is L-glutamine + H2O = L-glutamate + NH4(+). The polypeptide is Glutaminase (Vibrio cholerae serotype O1 (strain ATCC 39315 / El Tor Inaba N16961)).